A 231-amino-acid polypeptide reads, in one-letter code: 2-C-methyl-D-erythritol 4-phosphate cytidylyltransferase (231 aa).

This sequence belongs to the IspD/TarI cytidylyltransferase family. IspD subfamily.

It catalyses the reaction 2-C-methyl-D-erythritol 4-phosphate + CTP + H(+) = 4-CDP-2-C-methyl-D-erythritol + diphosphate. The protein operates within isoprenoid biosynthesis; isopentenyl diphosphate biosynthesis via DXP pathway; isopentenyl diphosphate from 1-deoxy-D-xylulose 5-phosphate: step 2/6. Functionally, catalyzes the formation of 4-diphosphocytidyl-2-C-methyl-D-erythritol from CTP and 2-C-methyl-D-erythritol 4-phosphate (MEP). In Fusobacterium nucleatum subsp. nucleatum (strain ATCC 25586 / DSM 15643 / BCRC 10681 / CIP 101130 / JCM 8532 / KCTC 2640 / LMG 13131 / VPI 4355), this protein is 2-C-methyl-D-erythritol 4-phosphate cytidylyltransferase.